The sequence spans 127 residues: Protein ApaG (127 aa).

The region spanning 3–127 (ANSPPTIKCN…FRLAIPNILH (125 aa)) is the ApaG domain.

This chain is Protein ApaG, found in Photobacterium profundum (strain SS9).